The chain runs to 224 residues: Biosynthetic peptidoglycan transglycosylase (224 aa).

Residues 12-32 (ILVVLAILPVFLLLVYSLPFV) traverse the membrane as a helical segment.

The protein belongs to the glycosyltransferase 51 family.

It localises to the cell inner membrane. The enzyme catalyses [GlcNAc-(1-&gt;4)-Mur2Ac(oyl-L-Ala-gamma-D-Glu-L-Lys-D-Ala-D-Ala)](n)-di-trans,octa-cis-undecaprenyl diphosphate + beta-D-GlcNAc-(1-&gt;4)-Mur2Ac(oyl-L-Ala-gamma-D-Glu-L-Lys-D-Ala-D-Ala)-di-trans,octa-cis-undecaprenyl diphosphate = [GlcNAc-(1-&gt;4)-Mur2Ac(oyl-L-Ala-gamma-D-Glu-L-Lys-D-Ala-D-Ala)](n+1)-di-trans,octa-cis-undecaprenyl diphosphate + di-trans,octa-cis-undecaprenyl diphosphate + H(+). It participates in cell wall biogenesis; peptidoglycan biosynthesis. Peptidoglycan polymerase that catalyzes glycan chain elongation from lipid-linked precursors. The chain is Biosynthetic peptidoglycan transglycosylase from Brucella suis biovar 1 (strain 1330).